A 373-amino-acid chain; its full sequence is tRNA-specific 2-thiouridylase MnmA (373 aa).

Residues 12–19 (GMSGGVDS) and Met-38 each bind ATP. Positions 98-100 (NPD) are interaction with target base in tRNA. Catalysis depends on Cys-103, which acts as the Nucleophile. Cys-103 and Cys-200 are joined by a disulfide. Gly-127 lines the ATP pocket. Positions 150 to 152 (KDQ) are interaction with tRNA. Residue Cys-200 is the Cysteine persulfide intermediate of the active site. An interaction with tRNA region spans residues 312 to 313 (RY).

The protein belongs to the MnmA/TRMU family.

It localises to the cytoplasm. The enzyme catalyses S-sulfanyl-L-cysteinyl-[protein] + uridine(34) in tRNA + AH2 + ATP = 2-thiouridine(34) in tRNA + L-cysteinyl-[protein] + A + AMP + diphosphate + H(+). In terms of biological role, catalyzes the 2-thiolation of uridine at the wobble position (U34) of tRNA, leading to the formation of s(2)U34. The protein is tRNA-specific 2-thiouridylase MnmA of Streptococcus pyogenes serotype M3 (strain SSI-1).